We begin with the raw amino-acid sequence, 88 residues long: Sec-independent protein translocase protein TatA (88 aa).

Residues 1 to 21 (MNLGPTEILLILVIVVLLFGA) form a helical membrane-spanning segment. The segment covering 46 to 56 (SNDDQRYEEQQ) has biased composition (basic and acidic residues). The tract at residues 46–88 (SNDDQRYEEQQQQRQIAAQAQQQVVNPVEIPQPQPTDIQRPQQ) is disordered. The span at 57 to 68 (QQRQIAAQAQQQ) shows a compositional bias: low complexity.

The protein belongs to the TatA/E family. In terms of assembly, the Tat system comprises two distinct complexes: a TatABC complex, containing multiple copies of TatA, TatB and TatC subunits, and a separate TatA complex, containing only TatA subunits. Substrates initially bind to the TatABC complex, which probably triggers association of the separate TatA complex to form the active translocon.

Its subcellular location is the cell membrane. Its function is as follows. Part of the twin-arginine translocation (Tat) system that transports large folded proteins containing a characteristic twin-arginine motif in their signal peptide across membranes. TatA could form the protein-conducting channel of the Tat system. This Corynebacterium diphtheriae (strain ATCC 700971 / NCTC 13129 / Biotype gravis) protein is Sec-independent protein translocase protein TatA.